Reading from the N-terminus, the 134-residue chain is ATP synthase epsilon chain, chloroplastic (134 aa).

It belongs to the ATPase epsilon chain family. As to quaternary structure, F-type ATPases have 2 components, CF(1) - the catalytic core - and CF(0) - the membrane proton channel. CF(1) has five subunits: alpha(3), beta(3), gamma(1), delta(1), epsilon(1). CF(0) has three main subunits: a, b and c.

Its subcellular location is the plastid. The protein localises to the chloroplast thylakoid membrane. Functionally, produces ATP from ADP in the presence of a proton gradient across the membrane. The protein is ATP synthase epsilon chain, chloroplastic of Pyropia yezoensis (Susabi-nori).